The following is an 880-amino-acid chain: Alanine--tRNA ligase (880 aa).

His567, His571, Cys669, and His673 together coordinate Zn(2+).

This sequence belongs to the class-II aminoacyl-tRNA synthetase family. Requires Zn(2+) as cofactor.

It is found in the cytoplasm. It catalyses the reaction tRNA(Ala) + L-alanine + ATP = L-alanyl-tRNA(Ala) + AMP + diphosphate. Catalyzes the attachment of alanine to tRNA(Ala) in a two-step reaction: alanine is first activated by ATP to form Ala-AMP and then transferred to the acceptor end of tRNA(Ala). Also edits incorrectly charged Ser-tRNA(Ala) and Gly-tRNA(Ala) via its editing domain. This Bacillus mycoides (strain KBAB4) (Bacillus weihenstephanensis) protein is Alanine--tRNA ligase.